A 100-amino-acid chain; its full sequence is uncharacterized protein (100 aa).

This is an uncharacterized protein from Bacillus subtilis (strain 168).